Consider the following 73-residue polypeptide: uncharacterized protein (73 aa).

Positions methionine 1–alanine 30 are cleaved as a signal peptide.

This is an uncharacterized protein from Archaeoglobus fulgidus (strain ATCC 49558 / DSM 4304 / JCM 9628 / NBRC 100126 / VC-16).